The chain runs to 87 residues: Small ribosomal subunit protein bS20 (87 aa).

Belongs to the bacterial ribosomal protein bS20 family.

Functionally, binds directly to 16S ribosomal RNA. The sequence is that of Small ribosomal subunit protein bS20 from Lachnoclostridium phytofermentans (strain ATCC 700394 / DSM 18823 / ISDg) (Clostridium phytofermentans).